We begin with the raw amino-acid sequence, 224 residues long: uncharacterized protein (224 aa).

Transmembrane regions (helical) follow at residues 39–59 (LICL…FYSI), 70–90 (YLSL…ILFA), 103–123 (VFVF…IGAI), and 139–159 (MHIG…FLIT).

The protein localises to the membrane. This is an uncharacterized protein from Dictyostelium discoideum (Social amoeba).